The primary structure comprises 330 residues: Lipoyl synthase (330 aa).

Positions 55, 60, 66, 81, 85, 88, and 292 each coordinate [4Fe-4S] cluster. The Radical SAM core domain maps to 67-281 (WEDREATFLI…AEEAREIGFV (215 aa)).

The protein belongs to the radical SAM superfamily. Lipoyl synthase family. [4Fe-4S] cluster serves as cofactor.

It is found in the cytoplasm. It carries out the reaction [[Fe-S] cluster scaffold protein carrying a second [4Fe-4S](2+) cluster] + N(6)-octanoyl-L-lysyl-[protein] + 2 oxidized [2Fe-2S]-[ferredoxin] + 2 S-adenosyl-L-methionine + 4 H(+) = [[Fe-S] cluster scaffold protein] + N(6)-[(R)-dihydrolipoyl]-L-lysyl-[protein] + 4 Fe(3+) + 2 hydrogen sulfide + 2 5'-deoxyadenosine + 2 L-methionine + 2 reduced [2Fe-2S]-[ferredoxin]. It functions in the pathway protein modification; protein lipoylation via endogenous pathway; protein N(6)-(lipoyl)lysine from octanoyl-[acyl-carrier-protein]: step 2/2. Catalyzes the radical-mediated insertion of two sulfur atoms into the C-6 and C-8 positions of the octanoyl moiety bound to the lipoyl domains of lipoate-dependent enzymes, thereby converting the octanoylated domains into lipoylated derivatives. This is Lipoyl synthase from Cutibacterium acnes (strain DSM 16379 / KPA171202) (Propionibacterium acnes).